The chain runs to 329 residues: Aspartate carbamoyltransferase catalytic subunit (329 aa).

Residues arginine 63 and threonine 64 each coordinate carbamoyl phosphate. Lysine 91 provides a ligand contact to L-aspartate. Carbamoyl phosphate-binding residues include arginine 113, histidine 141, and glutamine 144. L-aspartate is bound by residues arginine 179 and arginine 234. Residues glycine 275 and proline 276 each coordinate carbamoyl phosphate.

This sequence belongs to the aspartate/ornithine carbamoyltransferase superfamily. ATCase family. Heterododecamer (2C3:3R2) of six catalytic PyrB chains organized as two trimers (C3), and six regulatory PyrI chains organized as three dimers (R2).

It catalyses the reaction carbamoyl phosphate + L-aspartate = N-carbamoyl-L-aspartate + phosphate + H(+). It participates in pyrimidine metabolism; UMP biosynthesis via de novo pathway; (S)-dihydroorotate from bicarbonate: step 2/3. Its function is as follows. Catalyzes the condensation of carbamoyl phosphate and aspartate to form carbamoyl aspartate and inorganic phosphate, the committed step in the de novo pyrimidine nucleotide biosynthesis pathway. In Magnetococcus marinus (strain ATCC BAA-1437 / JCM 17883 / MC-1), this protein is Aspartate carbamoyltransferase catalytic subunit.